The sequence spans 420 residues: Tyrosine--tRNA ligase (420 aa).

Residue Tyr38 participates in L-tyrosine binding. Positions 43–52 (PTGDSLHIGH) match the 'HIGH' region motif. L-tyrosine is bound by residues Tyr169 and Gln173. Positions 231-235 (KFGKS) match the 'KMSKS' region motif. Residue Lys234 participates in ATP binding. The S4 RNA-binding domain occupies 353–419 (KNIVDFLVDT…GKRKYTLVTI (67 aa)).

The protein belongs to the class-I aminoacyl-tRNA synthetase family. TyrS type 1 subfamily. As to quaternary structure, homodimer.

It localises to the cytoplasm. It catalyses the reaction tRNA(Tyr) + L-tyrosine + ATP = L-tyrosyl-tRNA(Tyr) + AMP + diphosphate + H(+). Its function is as follows. Catalyzes the attachment of tyrosine to tRNA(Tyr) in a two-step reaction: tyrosine is first activated by ATP to form Tyr-AMP and then transferred to the acceptor end of tRNA(Tyr). The chain is Tyrosine--tRNA ligase from Lactobacillus acidophilus (strain ATCC 700396 / NCK56 / N2 / NCFM).